Here is a 381-residue protein sequence, read N- to C-terminus: MDFQPGELCAYYRLCRYLGIFCIDYNPTKKKFRLRRSVLCYIVHFALQAYLVGCISVMVTYWRRCFKSELTTTGNHFDRLVMVIALGILVVQNAWLIWLQAPHLRIVRQIEFYRRNHLANVRLLLPKRLLWLIIATNVVYMANFIKTCIFEWLTDASRLFVITSLGFPLRYLVTSFTMGTYFCMVHIVRLVLDWNQSQINAIIDESADLKMTSPNRLRLRVCLEMHDRLMLLCNDEISLVYGFIAWLSWMFASLDVTGVIYLTMVIQTKKSIVLKLITNVVWLSPTFMTCAASFMSNRVTIQANKTAKMLTKVPRTGTGLDRMIEKFLLKNLRQKPILTAYGFFALDKSTLFKLFTAIFTYMVILVQFKEMENSTKSINKF.

The Cytoplasmic portion of the chain corresponds to 1 to 37; it reads MDFQPGELCAYYRLCRYLGIFCIDYNPTKKKFRLRRS. Residues 38 to 58 traverse the membrane as a helical segment; that stretch reads VLCYIVHFALQAYLVGCISVM. At 59-79 the chain is on the extracellular side; it reads VTYWRRCFKSELTTTGNHFDR. The chain crosses the membrane as a helical span at residues 80-100; the sequence is LVMVIALGILVVQNAWLIWLQ. Residues 101 to 129 are Cytoplasmic-facing; the sequence is APHLRIVRQIEFYRRNHLANVRLLLPKRL. A helical membrane pass occupies residues 130–150; sequence LWLIIATNVVYMANFIKTCIF. The Extracellular segment spans residues 151–171; it reads EWLTDASRLFVITSLGFPLRY. A helical transmembrane segment spans residues 172–192; that stretch reads LVTSFTMGTYFCMVHIVRLVL. At 193–239 the chain is on the cytoplasmic side; it reads DWNQSQINAIIDESADLKMTSPNRLRLRVCLEMHDRLMLLCNDEISL. A helical transmembrane segment spans residues 240–260; the sequence is VYGFIAWLSWMFASLDVTGVI. The Extracellular segment spans residues 261 to 271; the sequence is YLTMVIQTKKS. The helical transmembrane segment at 272–292 threads the bilayer; the sequence is IVLKLITNVVWLSPTFMTCAA. At 293–350 the chain is on the cytoplasmic side; it reads SFMSNRVTIQANKTAKMLTKVPRTGTGLDRMIEKFLLKNLRQKPILTAYGFFALDKST. Residues 351–371 traverse the membrane as a helical segment; that stretch reads LFKLFTAIFTYMVILVQFKEM. At 372 to 381 the chain is on the extracellular side; it reads ENSTKSINKF. Asn373 carries an N-linked (GlcNAc...) asparagine glycan.

Belongs to the insect chemoreceptor superfamily. Gustatory receptor (GR) family. Gr21a subfamily. As to expression, expressed in the adult labellar chemosensory neurons. In larvae, is expressed in neurons of the terminal external chemosensory organ, as well as in the dorsal pharyngeal sense organ.

The protein resides in the cell membrane. Gustatory receptor which mediates acceptance or avoidance behavior, depending on its substrates. Plays a role in sustaining courtship behavior in males, possibly through the reception of a stimulating arrestant pheromone. The protein is Gustatory and pheromone receptor 39a, isoform C (Gr39a) of Drosophila melanogaster (Fruit fly).